Here is a 316-residue protein sequence, read N- to C-terminus: ATP synthase gamma chain (316 aa).

It belongs to the ATPase gamma chain family. F-type ATPases have 2 components, CF(1) - the catalytic core - and CF(0) - the membrane proton channel. CF(1) has five subunits: alpha(3), beta(3), gamma(1), delta(1), epsilon(1). CF(0) has three main subunits: a, b and c.

The protein localises to the cellular thylakoid membrane. Functionally, produces ATP from ADP in the presence of a proton gradient across the membrane. The gamma chain is believed to be important in regulating ATPase activity and the flow of protons through the CF(0) complex. The sequence is that of ATP synthase gamma chain from Synechococcus sp. (strain WH7803).